Consider the following 168-residue polypeptide: Oocyte-secreted protein 2 (168 aa).

A signal peptide spans 1-21 (MGVSMALEVLVYLAVLVWTCA).

Belongs to the PLAC1 family. Expressed in ovaries. Highly expressed in the germinal vesicles oocytes and metaphase II oocytes.

It is found in the secreted. It localises to the cytoplasm. In Mus musculus (Mouse), this protein is Oocyte-secreted protein 2 (Oosp2).